We begin with the raw amino-acid sequence, 303 residues long: Sulfotransferase 6B1 (303 aa).

Lys-65–Trp-70 provides a ligand contact to 3'-phosphoadenylyl sulfate. The active-site Proton acceptor is His-118. 3'-phosphoadenylyl sulfate contacts are provided by residues Arg-140, Ser-148, Tyr-203, Ser-237–Met-242, and Arg-259–Gly-261.

It belongs to the sulfotransferase 1 family.

The protein resides in the cytoplasm. It localises to the cytosol. It carries out the reaction thyroxine + 3'-phosphoadenylyl sulfate = thyroxine sulfate + adenosine 3',5'-bisphosphate + H(+). Sulfotransferase that utilizes 3'-phospho-5'-adenylyl sulfate (PAPS) as sulfonate donor to catalyze the sulfate conjugation of thyroxine. Involved in the metabolism of thyroxine. This Gorilla gorilla gorilla (Western lowland gorilla) protein is Sulfotransferase 6B1 (SULT6B1).